The following is a 132-amino-acid chain: Small ribosomal subunit protein uS8 (132 aa).

Belongs to the universal ribosomal protein uS8 family. As to quaternary structure, part of the 30S ribosomal subunit. Contacts proteins S5 and S12.

In terms of biological role, one of the primary rRNA binding proteins, it binds directly to 16S rRNA central domain where it helps coordinate assembly of the platform of the 30S subunit. In Geotalea daltonii (strain DSM 22248 / JCM 15807 / FRC-32) (Geobacter daltonii), this protein is Small ribosomal subunit protein uS8.